The primary structure comprises 2313 residues: Cell surface glycoprotein 1 (2313 aa).

Positions 1 to 28 (MKRKNKVLSILLTLLLIISTTSVNMSFA) are cleaved as a signal peptide. 2 Cohesin domains span residues 34 to 197 (IEMV…VVEA) and 205 to 367 (VALE…EIVV). Acidic residues predominate over residues 369 to 378 (GEEPGEEPTE). Positions 369-400 (GEEPGEEPTEEPVPTETSVDPTPTVTEEPVPS) are disordered. A compositionally biased stretch (low complexity) spans 380-400 (PVPTETSVDPTPTVTEEPVPS). Residues 407–569 (VIMELDKTKV…SVVQPGEIVV (163 aa)) form the Cohesin 3 domain. Residues 571–580 (GEEPGEEPTE) are compositionally biased toward acidic residues. Positions 571 to 602 (GEEPGEEPTEEPVPTETSVDPTPTVTEEPVPS) are disordered. Residues 582 to 602 (PVPTETSVDPTPTVTEEPVPS) show a composition bias toward low complexity. Residues 609–771 (VIMELDKTKV…SVVQPGEIVA (163 aa)) form the Cohesin 4 domain. Residues 772–782 (EGEEPGEEPTE) show a composition bias toward acidic residues. The disordered stretch occupies residues 772-805 (EGEEPGEEPTEEPVPTETSADPTPTVTEEPVPSE). The span at 784-803 (PVPTETSADPTPTVTEEPVP) shows a compositional bias: low complexity. One can recognise a Cohesin 5 domain in the interval 811–973 (VIMELDKTKV…SVVQPGEIVA (163 aa)). The span at 974–984 (EGEEPGEEPTE) shows a compositional bias: acidic residues. The segment at 974 to 1007 (EGEEPGEEPTEEPVPTETPVDPTPTVTEEPVPSE) is disordered. Low complexity predominate over residues 986-1007 (PVPTETPVDPTPTVTEEPVPSE). Positions 1013–1175 (VIMELDKTKV…SVVQPGEIVA (163 aa)) constitute a Cohesin 6 domain. 2 disordered regions span residues 1177–1203 (GEEPTEEPVPTETPVDPTPTVTEEPVP) and 1374–2111 (ASDE…PDGS). Low complexity predominate over residues 1184–1203 (PVPTETPVDPTPTVTEEPVP). The Cohesin 7 domain occupies 1211–1375 (VIMELDKTKV…IQPAPIKAAS (165 aa)). Low complexity predominate over residues 1376 to 1390 (DEPIPTDTPSDEPTP). Residues 1383–2025 (TPSDEPTPSD…SDEPTPSETP (643 aa)) are approximate tandem repeats of T-P-S-D-E-P. Positions 1391–1411 (SDEPTPSDEPTPSDEPTPSDE) are enriched in pro residues. Residues 1423 to 1433 (PTDTPSDEPTP) show a composition bias toward low complexity. Residues 1434–1454 (SDEPTPSDEPTPSDEPTPSDE) are compositionally biased toward pro residues. A compositionally biased stretch (low complexity) spans 1466-1476 (PTDTPSDEPTP). The span at 1477–1497 (SDEPTPSDEPTPSDEPTPSDE) shows a compositional bias: pro residues. Over residues 1509–1519 (PTDTPSDEPTP) the composition is skewed to low complexity. Residues 1520–1540 (SDEPTPSDEPTPSDEPTPSDE) are compositionally biased toward pro residues. Residues 1552–1562 (PTDTPSDEPTP) show a composition bias toward low complexity. A compositionally biased stretch (pro residues) spans 1563–1595 (SDEPTPSDEPTPSDEPTPSDEPTPSDEPTPSDE). Low complexity predominate over residues 1607 to 1617 (PTDTPSDEPTP). Over residues 1618-1650 (SDEPTPSDEPTPSDEPTPSDEPTPSDEPTPSDE) the composition is skewed to pro residues. Positions 1662–1672 (PTDTPSDEPTP) are enriched in low complexity. Residues 1673-1693 (SDEPTPSDEPTPSDEPTPSDE) show a composition bias toward pro residues. The span at 1705–1715 (PTDTPSDEPTP) shows a compositional bias: low complexity. Residues 1716–1736 (SDEPTPSDEPTPSDEPTPSDE) show a composition bias toward pro residues. Residues 1748 to 1758 (PTDTPSDEPTP) show a composition bias toward low complexity. Positions 1759–1779 (SDEPTPSDEPTPSDEPTPSDE) are enriched in pro residues. A compositionally biased stretch (low complexity) spans 1791–1801 (PTDTPSDEPTP). Residues 1802 to 1822 (SDEPTPSDEPTPSDEPTPSDE) are compositionally biased toward pro residues. Residues 1834-1844 (PTDTPSDEPTP) are compositionally biased toward low complexity. Residues 1845 to 1865 (SDEPTPSDEPTPSDEPTPSDE) are compositionally biased toward pro residues. Positions 1877–1887 (PTDTPSDEPTP) are enriched in low complexity. The span at 1888–1908 (SDEPTPSDEPTPSDEPTPSDE) shows a compositional bias: pro residues. The segment covering 1920–1930 (PTDTPSDEPTP) has biased composition (low complexity). Pro residues predominate over residues 1931–1963 (SDEPTPSDEPTPSDEPTPSDEPTPSDEPTPSDE). Low complexity predominate over residues 1975–1985 (PTDTPSDEPTP). 2 stretches are compositionally biased toward pro residues: residues 1986 to 2018 (SDEPTPSDEPTPSDEPTPSDEPTPSDEPTPSDE) and 2027 to 2039 (EPTPTTTPTPTPS). Positions 2045 to 2062 (GSGGSGGSGGGGGGGGGT) are enriched in gly residues. SLH domains are found at residues 2067-2140 (PTPT…YGAQ), 2141-2204 (SASP…EIMS), and 2211-2274 (ISNP…GAPK). Low complexity predominate over residues 2073–2082 (SKPTSTPAPT).

Assembled into mono-layered crystalline arrays.

It localises to the secreted. The protein localises to the cell wall. The protein resides in the S-layer. The chain is Cell surface glycoprotein 1 (olpB) from Acetivibrio thermocellus (strain ATCC 27405 / DSM 1237 / JCM 9322 / NBRC 103400 / NCIMB 10682 / NRRL B-4536 / VPI 7372) (Clostridium thermocellum).